The sequence spans 154 residues: Cold shock domain-containing protein C2 (154 aa).

Position 19 is a phosphoserine (S19). The segment at 38-62 is disordered; that stretch reads GGGIAPRDLPSPLPTKRTRTYSATA. A CSD domain is found at 69–136; the sequence is VFKGVCKQFS…KFQAVEVVLT (68 aa).

It is found in the nucleus. The protein resides in the cytoplasm. Functionally, RNA-binding factor which binds specifically to the very 3'-UTR ends of both histone H1 and H3.3 mRNAs, encompassing the polyadenylation signal. Might play a central role in the negative regulation of histone variant synthesis in the developing brain. The protein is Cold shock domain-containing protein C2 (Csdc2) of Mus musculus (Mouse).